A 437-amino-acid chain; its full sequence is Amino-acid acetyltransferase (437 aa).

The N-acetyltransferase domain occupies 289 to 429 (ENIRLATSFD…EHYNYQRMSK (141 aa)).

It belongs to the acetyltransferase family. ArgA subfamily.

It is found in the cytoplasm. It catalyses the reaction L-glutamate + acetyl-CoA = N-acetyl-L-glutamate + CoA + H(+). It participates in amino-acid biosynthesis; L-arginine biosynthesis; N(2)-acetyl-L-ornithine from L-glutamate: step 1/4. This is Amino-acid acetyltransferase from Actinobacillus pleuropneumoniae serotype 3 (strain JL03).